The chain runs to 207 residues: Casparian strip membrane protein 1 (207 aa).

Ala2 bears the N-acetylalanine mark. Residues 2–44 lie on the Cytoplasmic side of the membrane; the sequence is AKESTTIDVGEPNTMTKSTSHVVVDEKKKKGFVAAAAGGGYKR. The chain crosses the membrane as a helical span at residues 45-65; that stretch reads GLAVFDFLLRLAAIGITIGAS. At 66–95 the chain is on the extracellular side; sequence SVMFTAEETLPFFTQFLQFQAGYDDFPTFQ. Residues 96–116 form a helical membrane-spanning segment; the sequence is FFVIAIAIVASYLVLSLPFSI. Residues 117–128 are Cytoplasmic-facing; sequence VTIVRPLAVAPR. Residues 129 to 149 traverse the membrane as a helical segment; sequence LILLISDTVVLTLTTAAAAAA. Residues 150–181 lie on the Extracellular side of the membrane; that stretch reads ASIVYLAHNGNTNTNWLPICQQFGDFCQTAST. A helical transmembrane segment spans residues 182 to 202; that stretch reads AVVAASISVAFFVLLIVISAI. The Cytoplasmic segment spans residues 203 to 207; it reads ALKRH.

This sequence belongs to the Casparian strip membrane proteins (CASP) family. In terms of assembly, homodimer and heterodimers.

Its subcellular location is the cell membrane. Functionally, regulates membrane-cell wall junctions and localized cell wall deposition. Required for establishment of the Casparian strip membrane domain (CSD) and the subsequent formation of Casparian strips, a cell wall modification of the root endodermis that determines an apoplastic barrier between the intraorganismal apoplasm and the extraorganismal apoplasm and prevents lateral diffusion. The chain is Casparian strip membrane protein 1 from Raphanus raphanistrum (Wild radish).